The chain runs to 344 residues: MTSNFSQPALQLCYENTNGSCIKTPYSPGPRVILYMVFGFGAVLAVCGNLLVVISVLHFKQLHSPANFLIASLASADFLVGISVMPFSMVRSIESCWYFGDAFCSLHSCCDVAFCYSSALHLCFISVDRYIAVTDPLVYPTKFTVSVSGICISISWILPLVYSSAVFYTGISAKGIESLVSALNCVGGCQIVVNQDWVLIDFLLFFIPTLVMIILYSKIFLVAKQQAVKIETSVSDNRGESSSESHKARVAKRERKAAKTLGVTVVAFMVSWLPYTIDSLVDAFVGFITPAYVYEICCWSAYYNSAMNPLIYAFFYPWFRKAIKLILSGEILKSHSSTMSLFSE.

Topologically, residues methionine 1–arginine 31 are extracellular. Residues asparagine 4 and asparagine 18 are each glycosylated (N-linked (GlcNAc...) asparagine). Intrachain disulfides connect cysteine 21-cysteine 185 and cysteine 104-cysteine 189. A helical membrane pass occupies residues valine 32–valine 52. The Cytoplasmic portion of the chain corresponds to valine 53 to asparagine 67. Residues phenylalanine 68 to serine 88 traverse the membrane as a helical segment. Over methionine 89–aspartate 111 the chain is Extracellular. The chain crosses the membrane as a helical span at residues valine 112–alanine 132. Over valine 133 to serine 146 the chain is Cytoplasmic. Residues valine 147 to phenylalanine 167 traverse the membrane as a helical segment. At tyrosine 168–glutamine 195 the chain is on the extracellular side. Residues aspartate 196–tyrosine 216 form a helical membrane-spanning segment. At serine 217 to threonine 260 the chain is on the cytoplasmic side. The chain crosses the membrane as a helical span at residues leucine 261–valine 281. A topological domain (extracellular) is located at residue aspartate 282. The helical transmembrane segment at alanine 283 to tyrosine 303 threads the bilayer. Residues asparagine 304–glutamate 344 lie on the Cytoplasmic side of the membrane.

Belongs to the G-protein coupled receptor 1 family. Specifically expressed in neurons of the olfactory epithelium.

The protein resides in the cell membrane. Functionally, olfactory receptor specific for trace amines. Trace amine compounds are enriched in animal body fluids and act on trace amine-associated receptors (TAARs) to elicit both intraspecific and interspecific innate behaviors. Ligand-binding causes a conformation change that triggers signaling via G alpha proteins, possibly G(i)/G(o) G alpha proteins. In Mus musculus (Mouse), this protein is Trace amine-associated receptor 8b.